We begin with the raw amino-acid sequence, 370 residues long: MQNKTVFVGISGGVDSAVSALLLKQQYREVIGIFMECWDNTLNNDQLGHRAFNEHKSGCSSKEDFREAQAIAQLLGIKLIKQNLVEPYWKQVFLPTIDAFKNGLTPNPDMLCNRLIKFGLMRDYCKQLDPNSDFATGHYAALSWDNNQPLLAIPKDKHKDQTYFLAHVKPAQLQDVVFPLAHLLKTEVRQIALAHHFSVATKKDSTGICFIGERHFSDFLKNYLPVKPGVIYDWKTQRQLGSHEGVWFYTTGQRSGLNLGGQAARNFVVEKDLKTNTLYVSSDPEDLQRRGITLSHFNWLYQPNPLTQTVLVRIRHAQPLVQGHITVQPNNVVQVQLDQPIDRVTNGQYGVLYTQNGICLGSGIITASQI.

ATP contacts are provided by residues 9 to 16 (GISGGVDS) and M35. The tract at residues 107–109 (NPD) is interaction with target base in tRNA. The Nucleophile role is filled by C112. C112 and C209 are joined by a disulfide. G137 is a binding site for ATP. Positions 159-161 (KDQ) are interaction with tRNA. The active-site Cysteine persulfide intermediate is C209.

The protein belongs to the MnmA/TRMU family.

The protein localises to the cytoplasm. The enzyme catalyses S-sulfanyl-L-cysteinyl-[protein] + uridine(34) in tRNA + AH2 + ATP = 2-thiouridine(34) in tRNA + L-cysteinyl-[protein] + A + AMP + diphosphate + H(+). Catalyzes the 2-thiolation of uridine at the wobble position (U34) of tRNA, leading to the formation of s(2)U34. In Mycoplasma pneumoniae (strain ATCC 29342 / M129 / Subtype 1) (Mycoplasmoides pneumoniae), this protein is tRNA-specific 2-thiouridylase MnmA.